A 174-amino-acid polypeptide reads, in one-letter code: NADH-ubiquinone oxidoreductase chain 6 (174 aa).

6 helical membrane-spanning segments follow: residues 1–21 (MTYA…GFSS), 24–44 (SPIY…AVIL), 47–67 (GGGY…MVVF), 86–106 (VEVL…VLWV), 111–131 (GVVV…EGEG), and 151–171 (WLVV…IEIA).

It belongs to the complex I subunit 6 family. Core subunit of respiratory chain NADH dehydrogenase (Complex I) which is composed of 45 different subunits.

The protein resides in the mitochondrion inner membrane. It carries out the reaction a ubiquinone + NADH + 5 H(+)(in) = a ubiquinol + NAD(+) + 4 H(+)(out). Core subunit of the mitochondrial membrane respiratory chain NADH dehydrogenase (Complex I) which catalyzes electron transfer from NADH through the respiratory chain, using ubiquinone as an electron acceptor. Essential for the catalytic activity and assembly of complex I. The polypeptide is NADH-ubiquinone oxidoreductase chain 6 (MT-ND6) (Pongo abelii (Sumatran orangutan)).